Reading from the N-terminus, the 893-residue chain is NEDD4-binding protein 1 (893 aa).

Residues 59 to 143 form the KH-like domain; that stretch reads QEAVHSAKEY…IQQFVKLFES (85 aa). Positions 213–243 are disordered; the sequence is EYTQSAATGPSSARDEVVVQEDSRNKARTPV. The span at 214–223 shows a compositional bias: polar residues; the sequence is YTQSAATGPS. Residues 225-237 are compositionally biased toward basic and acidic residues; the sequence is ARDEVVVQEDSRN. Thr-241 is subject to Phosphothreonine. Phosphoserine is present on residues Ser-257, Ser-269, and Ser-299. Disordered regions lie at residues 273–339, 394–433, and 472–564; these read DALS…DGKD, RDFP…QSHT, and IWGS…PPLP. Polar residues-rich tracts occupy residues 405-433 and 523-537; these read ASQS…QSHT and GFQQ…NNTK. The segment covering 551–564 has biased composition (pro residues); that stretch reads QPKPNYPPLSPPLP. At Ser-560 the chain carries Phosphoserine. Positions 615–767 constitute an RNase NYN domain; the sequence is LKHIVIDGSN…LGRNGPRLEE (153 aa). The disordered stretch occupies residues 793–820; sequence PGFRSPSTQVANNSHQPPPRIQTSSSPW. The span at 797-820 shows a compositional bias: polar residues; the sequence is SPSTQVANNSHQPPPRIQTSSSPW. Positions 846 to 893 are coCUN; sequence RSSAETSELREALLKIFPDSEQKLKIDQILAAHPYMKDLNALSALVLD.

It belongs to the N4BP1 family. Interacts with NEDD4. Interacts with ITCH (via WW domain 2). Post-translationally, proteolytically cleaved by CASP8 downstream of TLR3 or TLR4, leading to its inactivation. Mainly cleaved at Asp-488 by CASP8. Cleaved by caspase-like protein MALT1, leading to its inactivation. In terms of processing, mono- and polyubiquitinated on the CoCUN region. Monoubiquitinated by NEDD4. Polyubiquitinated, leading to its degradation by the proteasome. Sumoylated with SUMO1, abrogating polyubiquitination and subsequent degradation. Desumoylated by SENP1, leading to accumulation in PML nuclear bodies.

The protein localises to the cytoplasm. It is found in the cytosol. The protein resides in the nucleus. It localises to the nucleolus. Its subcellular location is the PML body. Proteolytic cleavage by CASP8 or MALT1 leads to its inactivation. Its function is as follows. Potent suppressor of cytokine production that acts as a regulator of innate immune signaling and inflammation. Acts as a key negative regulator of select cytokine and chemokine responses elicited by TRIF-independent Toll-like receptors (TLRs), thereby limiting inflammatory cytokine responses to minor insults. In response to more threatening pathogens, cleaved by CASP8 downstream of TLR3 or TLR4, leading to its inactivation, thereby allowing production of inflammatory cytokines. Acts as a restriction factor against some viruses: restricts viral replication by binding to mRNA viruses and mediating their degradation via its ribonuclease activity. Also acts as an inhibitor of the E3 ubiquitin-protein ligase ITCH: acts by interacting with the second WW domain of ITCH, leading to compete with ITCH's substrates and impairing ubiquitination of substrates. The protein is NEDD4-binding protein 1 of Mus musculus (Mouse).